We begin with the raw amino-acid sequence, 714 residues long: Fatty acid oxidation complex subunit alpha (714 aa).

The segment at 1-190 (MDTVSAFKLE…KAGLVDEVVP (190 aa)) is enoyl-CoA hydratase. The tract at residues 306 to 714 (GSLRSVAVLG…TFWPADERLT (409 aa)) is 3-hydroxyacyl-CoA dehydrogenase.

The protein in the N-terminal section; belongs to the enoyl-CoA hydratase/isomerase family. It in the central section; belongs to the 3-hydroxyacyl-CoA dehydrogenase family. As to quaternary structure, heterotetramer of two alpha chains (FadJ) and two beta chains (FadI).

The protein localises to the cytoplasm. It carries out the reaction a (3S)-3-hydroxyacyl-CoA = a (2E)-enoyl-CoA + H2O. The enzyme catalyses a 4-saturated-(3S)-3-hydroxyacyl-CoA = a (3E)-enoyl-CoA + H2O. The catalysed reaction is a (3S)-3-hydroxyacyl-CoA + NAD(+) = a 3-oxoacyl-CoA + NADH + H(+). It catalyses the reaction (3S)-3-hydroxybutanoyl-CoA = (3R)-3-hydroxybutanoyl-CoA. The protein operates within lipid metabolism; fatty acid beta-oxidation. Its function is as follows. Catalyzes the formation of a hydroxyacyl-CoA by addition of water on enoyl-CoA. Also exhibits 3-hydroxyacyl-CoA epimerase and 3-hydroxyacyl-CoA dehydrogenase activities. This Klebsiella pneumoniae subsp. pneumoniae (strain ATCC 700721 / MGH 78578) protein is Fatty acid oxidation complex subunit alpha.